A 297-amino-acid chain; its full sequence is Small ribosomal subunit protein uS2 (297 aa).

The segment at 252 to 297 (GVPGTAFSAATAAPTSWEADGGDWAASSAAPAGESWAETQPAEAKW) is disordered. Positions 256–289 (TAFSAATAAPTSWEADGGDWAASSAAPAGESWAE) are enriched in low complexity.

The protein belongs to the universal ribosomal protein uS2 family. Component of the small ribosomal subunit. Mature ribosomes consist of a small (40S) and a large (60S) subunit. The 40S subunit contains about 33 different proteins and 1 molecule of RNA (18S). The 60S subunit contains about 49 different proteins and 3 molecules of RNA (25S, 5.8S and 5S). Interacts with rps21.

The protein localises to the cytoplasm. Its function is as follows. Required for the assembly and/or stability of the 40S ribosomal subunit. Required for the processing of the 20S rRNA-precursor to mature 18S rRNA in a late step of the maturation of 40S ribosomal subunits. The polypeptide is Small ribosomal subunit protein uS2 (rps0) (Aspergillus fumigatus (strain CBS 144.89 / FGSC A1163 / CEA10) (Neosartorya fumigata)).